The primary structure comprises 96 residues: ATP synthase subunit c (96 aa).

A run of 2 helical transmembrane segments spans residues 26-46 and 68-88; these read GLVL…CGIG and IMVT…YALV.

The protein belongs to the ATPase C chain family. F-type ATPases have 2 components, F(1) - the catalytic core - and F(0) - the membrane proton channel. F(1) has five subunits: alpha(3), beta(3), gamma(1), delta(1), epsilon(1). F(0) has three main subunits: a(1), b(2) and c(10-14). The alpha and beta chains form an alternating ring which encloses part of the gamma chain. F(1) is attached to F(0) by a central stalk formed by the gamma and epsilon chains, while a peripheral stalk is formed by the delta and b chains.

The protein localises to the cell inner membrane. Functionally, f(1)F(0) ATP synthase produces ATP from ADP in the presence of a proton or sodium gradient. F-type ATPases consist of two structural domains, F(1) containing the extramembraneous catalytic core and F(0) containing the membrane proton channel, linked together by a central stalk and a peripheral stalk. During catalysis, ATP synthesis in the catalytic domain of F(1) is coupled via a rotary mechanism of the central stalk subunits to proton translocation. Its function is as follows. Key component of the F(0) channel; it plays a direct role in translocation across the membrane. A homomeric c-ring of between 10-14 subunits forms the central stalk rotor element with the F(1) delta and epsilon subunits. The protein is ATP synthase subunit c of Oleidesulfovibrio alaskensis (strain ATCC BAA-1058 / DSM 17464 / G20) (Desulfovibrio alaskensis).